A 229-amino-acid chain; its full sequence is Protein GrpE (229 aa).

Disordered regions lie at residues 1 to 49 (MTEG…SANS) and 207 to 229 (DSTA…EDGD). Residues 13–24 (TDKRRIDPDTGE) show a composition bias toward basic and acidic residues.

This sequence belongs to the GrpE family. Homodimer.

Its subcellular location is the cytoplasm. In terms of biological role, participates actively in the response to hyperosmotic and heat shock by preventing the aggregation of stress-denatured proteins, in association with DnaK and GrpE. It is the nucleotide exchange factor for DnaK and may function as a thermosensor. Unfolded proteins bind initially to DnaJ; upon interaction with the DnaJ-bound protein, DnaK hydrolyzes its bound ATP, resulting in the formation of a stable complex. GrpE releases ADP from DnaK; ATP binding to DnaK triggers the release of the substrate protein, thus completing the reaction cycle. Several rounds of ATP-dependent interactions between DnaJ, DnaK and GrpE are required for fully efficient folding. The polypeptide is Protein GrpE (Mycobacterium leprae (strain TN)).